The sequence spans 159 residues: Immunoglobulin J chain (159 aa).

Residues 1 to 22 form the signal peptide; the sequence is MKNHLLFWGVLAVFIKAVHVKA. Pyrrolidone carboxylic acid is present on Gln23. 3 disulfide bridges follow: Cys35–Cys123, Cys94–Cys114, and Cys131–Cys156. Asn71 carries an N-linked (GlcNAc...) (complex) asparagine glycan.

As to quaternary structure, part of the secretory IgA (sIgA) complex that consists of two, four or five IgA monomers, and two additional non-Ig polypeptides, namely the JCHAIN and the secretory component (the proteolytic product of PIGR). Part of the secretory IgM (sIgM) complex that consists of five IgM monomers, and two additional non-Ig polypeptides, namely the JCHAIN and the secretory component (the proteolytic product of PIGR). JCHAIN-containing IgM interacts (via CH4 domain) with FCRM (via Ig-like domain).

The protein localises to the secreted. Functionally, serves to link two monomer units of either IgM or IgA. In the case of IgM, the J chain-joined dimer is a nucleating unit for the IgM pentamer, and in the case of IgA it induces dimers and/or larger polymers. It also helps to bind these immunoglobulins to secretory component. This is Immunoglobulin J chain from Homo sapiens (Human).